The following is a 479-amino-acid chain: GTPase Der (479 aa).

EngA-type G domains follow at residues 3-167 and 208-383; these read FKVA…GEAR and MRIA…KVWN. GTP is bound by residues 9 to 16, 56 to 60, 119 to 122, 214 to 221, 261 to 265, and 326 to 329; these read GRPNVGKS, DTAGF, NKAE, GRPNAGKS, DTAGM, and NKWD. Positions 384 to 468 constitute a KH-like domain; sequence SRVSTGKLNR…PIRIALRTSD (85 aa).

This sequence belongs to the TRAFAC class TrmE-Era-EngA-EngB-Septin-like GTPase superfamily. EngA (Der) GTPase family. As to quaternary structure, associates with the 50S ribosomal subunit.

GTPase that plays an essential role in the late steps of ribosome biogenesis. The sequence is that of GTPase Der from Mesorhizobium japonicum (strain LMG 29417 / CECT 9101 / MAFF 303099) (Mesorhizobium loti (strain MAFF 303099)).